Here is a 249-residue protein sequence, read N- to C-terminus: 5'-nucleotidase SurE (249 aa).

The a divalent metal cation site is built by aspartate 9, aspartate 10, serine 40, and asparagine 92.

Belongs to the SurE nucleotidase family. The cofactor is a divalent metal cation.

It is found in the cytoplasm. The enzyme catalyses a ribonucleoside 5'-phosphate + H2O = a ribonucleoside + phosphate. Functionally, nucleotidase that shows phosphatase activity on nucleoside 5'-monophosphates. The protein is 5'-nucleotidase SurE of Shewanella baltica (strain OS223).